The sequence spans 452 residues: Probable ECA polymerase (452 aa).

11 consecutive transmembrane segments (helical) span residues 6 to 26, 37 to 57, 63 to 83, 118 to 138, 155 to 175, 181 to 201, 207 to 227, 228 to 248, 341 to 361, 378 to 398, and 410 to 430; these read FSGL…LTWF, VFFS…TSVL, VGVA…CFYG, VILM…NGFL, GVAL…VYFL, AWLF…MIVG, IIIA…ISLW, MLAA…LKRY, LVVM…GLII, YKAA…IVLA, and VFFL…FWLF.

Belongs to the WzyE family. In terms of assembly, probably part of a complex composed of WzxE, WzyE and WzzE.

The protein resides in the cell inner membrane. It functions in the pathway bacterial outer membrane biogenesis; enterobacterial common antigen biosynthesis. Its function is as follows. Probably involved in the polymerization of enterobacterial common antigen (ECA) trisaccharide repeat units. The protein is Probable ECA polymerase of Salmonella typhi.